The chain runs to 347 residues: Phosphate acyltransferase (347 aa).

It belongs to the PlsX family. In terms of assembly, homodimer. Probably interacts with PlsY.

It localises to the cytoplasm. It catalyses the reaction a fatty acyl-[ACP] + phosphate = an acyl phosphate + holo-[ACP]. Its pathway is lipid metabolism; phospholipid metabolism. Functionally, catalyzes the reversible formation of acyl-phosphate (acyl-PO(4)) from acyl-[acyl-carrier-protein] (acyl-ACP). This enzyme utilizes acyl-ACP as fatty acyl donor, but not acyl-CoA. This chain is Phosphate acyltransferase, found in Methylobacillus flagellatus (strain ATCC 51484 / DSM 6875 / VKM B-1610 / KT).